Consider the following 444-residue polypeptide: Trigger factor (444 aa).

Residues 166–251 enclose the PPIase FKBP-type domain; that stretch reads GDQIVIDFKG…VKAVKAPKPA (86 aa).

Belongs to the FKBP-type PPIase family. Tig subfamily.

The protein resides in the cytoplasm. It catalyses the reaction [protein]-peptidylproline (omega=180) = [protein]-peptidylproline (omega=0). In terms of biological role, involved in protein export. Acts as a chaperone by maintaining the newly synthesized protein in an open conformation. Functions as a peptidyl-prolyl cis-trans isomerase. The chain is Trigger factor from Cereibacter sphaeroides (strain ATCC 17025 / ATH 2.4.3) (Rhodobacter sphaeroides).